A 185-amino-acid chain; its full sequence is Peptidyl-tRNA hydrolase (185 aa).

Tyr-14 is a binding site for tRNA. The active-site Proton acceptor is the His-19. TRNA contacts are provided by Tyr-65, Asn-67, and Asn-113.

Belongs to the PTH family. In terms of assembly, monomer.

The protein resides in the cytoplasm. It carries out the reaction an N-acyl-L-alpha-aminoacyl-tRNA + H2O = an N-acyl-L-amino acid + a tRNA + H(+). Its function is as follows. Hydrolyzes ribosome-free peptidyl-tRNAs (with 1 or more amino acids incorporated), which drop off the ribosome during protein synthesis, or as a result of ribosome stalling. Functionally, catalyzes the release of premature peptidyl moieties from peptidyl-tRNA molecules trapped in stalled 50S ribosomal subunits, and thus maintains levels of free tRNAs and 50S ribosomes. This is Peptidyl-tRNA hydrolase from Rickettsia akari (strain Hartford).